A 542-amino-acid chain; its full sequence is CTP synthase (542 aa).

The tract at residues 1–265 is amidoligase domain; that stretch reads MARYVFITGG…DSEVLSAFGI (265 aa). Ser-13 is a CTP binding site. Ser-13 contacts UTP. 14-19 is an ATP binding site; the sequence is SLGKGI. Position 54 (Tyr-54) interacts with L-glutamine. An ATP-binding site is contributed by Asp-71. Positions 71 and 139 each coordinate Mg(2+). CTP-binding positions include 146–148, 186–191, and Lys-222; these read DIE and KTKPTQ. UTP contacts are provided by residues 186-191 and Lys-222; that span reads KTKPTQ. The 251-residue stretch at 291–541 folds into the Glutamine amidotransferase type-1 domain; it reads TIAVVGKYTG…IEAAIEQSRL (251 aa). L-glutamine is bound at residue Gly-353. The active-site Nucleophile; for glutamine hydrolysis is Cys-380. L-glutamine contacts are provided by residues 381–384, Glu-404, and Arg-469; that span reads FGMQ. Active-site residues include His-514 and Glu-516.

The protein belongs to the CTP synthase family. As to quaternary structure, homotetramer.

It carries out the reaction UTP + L-glutamine + ATP + H2O = CTP + L-glutamate + ADP + phosphate + 2 H(+). The catalysed reaction is L-glutamine + H2O = L-glutamate + NH4(+). The enzyme catalyses UTP + NH4(+) + ATP = CTP + ADP + phosphate + 2 H(+). The protein operates within pyrimidine metabolism; CTP biosynthesis via de novo pathway; CTP from UDP: step 2/2. Its activity is regulated as follows. Allosterically activated by GTP, when glutamine is the substrate; GTP has no effect on the reaction when ammonia is the substrate. The allosteric effector GTP functions by stabilizing the protein conformation that binds the tetrahedral intermediate(s) formed during glutamine hydrolysis. Inhibited by the product CTP, via allosteric rather than competitive inhibition. Functionally, catalyzes the ATP-dependent amination of UTP to CTP with either L-glutamine or ammonia as the source of nitrogen. Regulates intracellular CTP levels through interactions with the four ribonucleotide triphosphates. This chain is CTP synthase, found in Brucella suis (strain ATCC 23445 / NCTC 10510).